The sequence spans 777 residues: Elongation factor G, mitochondrial (777 aa).

The region spanning 34-338 (LRQRNVGISA…GMCAYLPNPM (305 aa)) is the tr-type G domain. GTP-binding positions include 43-50 (AHIDSGKT), 136-140 (DTPGH), and 190-193 (NKMD).

Belongs to the TRAFAC class translation factor GTPase superfamily. Classic translation factor GTPase family. EF-G/EF-2 subfamily.

The protein resides in the mitochondrion. Its pathway is protein biosynthesis; polypeptide chain elongation. Its function is as follows. Mitochondrial GTPase that catalyzes the GTP-dependent ribosomal translocation step during translation elongation. During this step, the ribosome changes from the pre-translocational (PRE) to the post-translocational (POST) state as the newly formed A-site-bound peptidyl-tRNA and P-site-bound deacylated tRNA move to the P and E sites, respectively. Catalyzes the coordinated movement of the two tRNA molecules, the mRNA and conformational changes in the ribosome. The sequence is that of Elongation factor G, mitochondrial from Malassezia globosa (strain ATCC MYA-4612 / CBS 7966) (Dandruff-associated fungus).